The chain runs to 349 residues: Hydroxymethylglutaryl-CoA synthase (349 aa).

Position 29 (Asp29) interacts with (3S)-3-hydroxy-3-methylglutaryl-CoA. Glu81 acts as the Proton donor/acceptor in catalysis. Residues Cys113, Ser154, Thr202, and His235 each contribute to the (3S)-3-hydroxy-3-methylglutaryl-CoA site. Residue Cys113 is the Acyl-thioester intermediate of the active site. The Proton donor/acceptor role is filled by His235. Arg240 provides a ligand contact to CoA. Residues Arg244, Asn267, and Ser297 each contribute to the (3S)-3-hydroxy-3-methylglutaryl-CoA site.

Belongs to the thiolase-like superfamily. Archaeal HMG-CoA synthase family. Interacts with acetoacetyl-CoA thiolase that catalyzes the precedent step in the pathway and with a DUF35 protein. The acetoacetyl-CoA thiolase/HMG-CoA synthase complex channels the intermediate via a fused CoA-binding site, which allows for efficient coupling of the endergonic thiolase reaction with the exergonic HMGCS reaction.

The enzyme catalyses acetoacetyl-CoA + acetyl-CoA + H2O = (3S)-3-hydroxy-3-methylglutaryl-CoA + CoA + H(+). It functions in the pathway metabolic intermediate biosynthesis; (R)-mevalonate biosynthesis; (R)-mevalonate from acetyl-CoA: step 2/3. Functionally, catalyzes the condensation of acetyl-CoA with acetoacetyl-CoA to form 3-hydroxy-3-methylglutaryl-CoA (HMG-CoA). Functions in the mevalonate (MVA) pathway leading to isopentenyl diphosphate (IPP), a key precursor for the biosynthesis of isoprenoid compounds that are building blocks of archaeal membrane lipids. This chain is Hydroxymethylglutaryl-CoA synthase, found in Pyrobaculum arsenaticum (strain DSM 13514 / JCM 11321 / PZ6).